Consider the following 732-residue polypeptide: Elongation factor 2 (732 aa).

In terms of domain architecture, tr-type G spans 19 to 260 (ERIRNMGIAA…MVVKHLPNPL (242 aa)). Residues 28–35 (AHIDHGKT), 94–98 (DTPGH), and 148–151 (NKVD) each bind GTP. At His-597 the chain carries Diphthamide.

The protein belongs to the TRAFAC class translation factor GTPase superfamily. Classic translation factor GTPase family. EF-G/EF-2 subfamily.

The protein localises to the cytoplasm. Catalyzes the GTP-dependent ribosomal translocation step during translation elongation. During this step, the ribosome changes from the pre-translocational (PRE) to the post-translocational (POST) state as the newly formed A-site-bound peptidyl-tRNA and P-site-bound deacylated tRNA move to the P and E sites, respectively. Catalyzes the coordinated movement of the two tRNA molecules, the mRNA and conformational changes in the ribosome. This chain is Elongation factor 2, found in Thermococcus kodakarensis (strain ATCC BAA-918 / JCM 12380 / KOD1) (Pyrococcus kodakaraensis (strain KOD1)).